We begin with the raw amino-acid sequence, 2201 residues long: Genome polyprotein (2201 aa).

The N-myristoyl glycine; by host moiety is linked to residue G2. Topologically, residues 2 to 1511 are cytoplasmic; sequence GAQVSTQKTG…YVSRAFICLQ (1510 aa). Residues 566 to 582 form an amphipathic alpha-helix region; the sequence is KLQGDVEEAIERARCTV. The Cell attachment site signature appears at 858 to 860; the sequence is RGD. Residues H888 and D906 each act as for protease 2A activity in the active site. The Zn(2+) site is built by C923 and C925. Residue C977 is the For protease 2A activity of the active site. Positions 983 and 985 each coordinate Zn(2+). A membrane-binding region spans residues 1117–1189; that stretch reads NDSWLKKFTE…EQSAPSQSDQ (73 aa). Residues 1117 to 1255 are oligomerization; that stretch reads NDSWLKKFTE…SPGAGKSVAT (139 aa). Positions 1138 to 1142 are RNA-binding; it reads AIKIQ. In terms of domain architecture, SF3 helicase spans 1221–1377; it reads EKKMSNYIQF…SMYSQNGKIN (157 aa). Residues C1385, C1397, and C1402 each coordinate Zn(2+). The C4-type; degenerate zinc-finger motif lies at 1385 to 1402; sequence CDEECCPVNFKKCCPLVC. The tract at residues 1429–1436 is RNA-binding; sequence EYNHRHSV. Residues 1440-1445 are oligomerization; that stretch reads LEALFQ. The stretch at 1512–1527 is an intramembrane region; that stretch reads AITTFVSVAGIIYIIY. Residues 1528 to 2201 are Cytoplasmic-facing; it reads KLFAGFQGAY…TLRRKWLDSF (674 aa). The residue at position 1537 (Y1537) is an O-(5'-phospho-RNA)-tyrosine. The Peptidase C3 domain maps to 1557 to 1735; that stretch reads GPAFEFAVAM…FSAALLKHYF (179 aa). Residues H1596, E1627, and C1703 each act as for protease 3C activity in the active site. The 117-residue stretch at 1966–2082 folds into the RdRp catalytic domain; the sequence is GHLIAFDYSG…SYPWPIDASL (117 aa). The Mg(2+) site is built by D1972 and D2068.

It belongs to the picornaviruses polyprotein family. Interacts with capsid protein VP1 and capsid protein VP3 to form heterotrimeric protomers. As to quaternary structure, interacts with capsid protein VP0, and capsid protein VP3 to form heterotrimeric protomers. Five protomers subsequently associate to form pentamers which serve as building blocks for the capsid. Interacts with capsid protein VP2, capsid protein VP3 and capsid protein VP4 following cleavage of capsid protein VP0. Interacts with host integrin heterodimer ITGAV/ITGB6. In terms of assembly, interacts with capsid protein VP1 and capsid protein VP3 in the mature capsid. Interacts with capsid protein VP0 and capsid protein VP1 to form heterotrimeric protomers. Five protomers subsequently associate to form pentamers which serve as building blocks for the capsid. Interacts with capsid protein VP4 in the mature capsid. Interacts with protein 2C; this interaction may be important for virion morphogenesis. As to quaternary structure, interacts with capsid protein VP1 and capsid protein VP3. In terms of assembly, homodimer. Homohexamer; forms a hexameric ring structure with 6-fold symmetry characteristic of AAA+ ATPases. Interacts (via N-terminus) with host RTN3 (via reticulon domain); this interaction is important for viral replication. Interacts with capsid protein VP3; this interaction may be important for virion morphogenesis. As to quaternary structure, interacts with protein 3CD. In terms of assembly, homodimer. Interacts with host GBF1. Interacts (via GOLD domain) with host ACBD3 (via GOLD domain); this interaction allows the formation of a viral protein 3A/ACBD3 heterotetramer with a 2:2 stoichiometry, which will stimulate the recruitment of host PI4KB in order to synthesize PI4P at the viral RNA replication sites. Interacts with RNA-directed RNA polymerase. As to quaternary structure, interacts with protein 3AB and with RNA-directed RNA polymerase. In terms of assembly, interacts with Viral protein genome-linked and with protein 3CD. The cofactor is Mg(2+). Specific enzymatic cleavages in vivo by the viral proteases yield processing intermediates and the mature proteins. Post-translationally, myristoylation is required for the formation of pentamers during virus assembly. Further assembly of 12 pentamers and a molecule of genomic RNA generates the provirion. In terms of processing, during virion maturation, immature virions are rendered infectious following cleavage of VP0 into VP4 and VP2. This maturation seems to be an autocatalytic event triggered by the presence of RNA in the capsid and it is followed by a conformational change infectious virion. Myristoylation is required during RNA encapsidation and formation of the mature virus particle. Post-translationally, VPg is uridylylated by the polymerase into VPg-pUpU. This acts as a nucleotide-peptide primer for the genomic RNA replication.

The protein localises to the virion. The protein resides in the host cytoplasm. It is found in the host cytoplasmic vesicle membrane. It localises to the host nucleus. The catalysed reaction is a ribonucleoside 5'-triphosphate + H2O = a ribonucleoside 5'-diphosphate + phosphate + H(+). It catalyses the reaction Selective cleavage of Tyr-|-Gly bond in the picornavirus polyprotein.. It carries out the reaction RNA(n) + a ribonucleoside 5'-triphosphate = RNA(n+1) + diphosphate. The enzyme catalyses Selective cleavage of Gln-|-Gly bond in the poliovirus polyprotein. In other picornavirus reactions Glu may be substituted for Gln, and Ser or Thr for Gly.. With respect to regulation, replication or transcription is subject to high level of random mutations by the nucleotide analog ribavirin. Functionally, forms an icosahedral capsid of pseudo T=3 symmetry with capsid proteins VP2 and VP3. The capsid is 300 Angstroms in diameter, composed of 60 copies of each capsid protein and enclosing the viral positive strand RNA genome. Capsid protein VP1 mainly forms the vertices of the capsid. Capsid protein VP1 interacts with host integrin ITGAV/ITGB6 to provide virion attachment to target host cells. This attachment induces virion internalization. Tyrosine kinases are probably involved in the entry process. After binding to its receptor, the capsid undergoes conformational changes. Capsid protein VP1 N-terminus (that contains an amphipathic alpha-helix) and capsid protein VP4 are externalized. Together, they shape a pore in the host membrane through which viral genome is translocated to host cell cytoplasm. Forms an icosahedral capsid of pseudo T=3 symmetry with capsid proteins VP2 and VP3. The capsid is 300 Angstroms in diameter, composed of 60 copies of each capsid protein and enclosing the viral positive strand RNA genome. In terms of biological role, lies on the inner surface of the capsid shell. After binding to the host receptor, the capsid undergoes conformational changes. Capsid protein VP4 is released, Capsid protein VP1 N-terminus is externalized, and together, they shape a pore in the host membrane through which the viral genome is translocated into the host cell cytoplasm. Its function is as follows. Component of immature procapsids, which is cleaved into capsid proteins VP4 and VP2 after maturation. Allows the capsid to remain inactive before the maturation step. Functionally, cysteine protease that cleaves viral polyprotein and specific host proteins. It is responsible for the autocatalytic cleavage between the P1 and P2 regions, which is the first cleavage occurring in the polyprotein. Also cleaves the host translation initiation factor EIF4G1, in order to shut down the capped cellular mRNA translation. Inhibits the host nucleus-cytoplasm protein and RNA trafficking by cleaving host members of the nuclear pores. Counteracts stress granule formation probably by antagonizing its assembly or promoting its dissassembly. Cleaves and inhibits host IFIH1/MDA5, thereby inhibiting the type-I IFN production and the establishment of the antiviral state. Cleaves and inhibits host MAVS, thereby inhibiting the type-I IFN production and the establishment of the antiviral state. Plays an essential role in the virus replication cycle by acting as a viroporin. Creates a pore in the host endoplasmic reticulum and as a consequence releases Ca2+ in the cytoplasm of infected cell. In turn, high levels of cytoplasmic calcium may trigger membrane trafficking and transport of viral ER-associated proteins to viroplasms, sites of viral genome replication. In terms of biological role, induces and associates with structural rearrangements of intracellular membranes. Displays RNA-binding, nucleotide binding and NTPase activities. May play a role in virion morphogenesis and viral RNA encapsidation by interacting with the capsid protein VP3. Its function is as follows. Localizes the viral replication complex to the surface of membranous vesicles. Together with protein 3CD binds the Cis-Active RNA Element (CRE) which is involved in RNA synthesis initiation. Acts as a cofactor to stimulate the activity of 3D polymerase, maybe through a nucleid acid chaperone activity. Functionally, localizes the viral replication complex to the surface of membranous vesicles. It inhibits host cell endoplasmic reticulum-to-Golgi apparatus transport and causes the disassembly of the Golgi complex, possibly through GBF1 interaction. This would result in depletion of MHC, trail receptors and IFN receptors at the host cell surface. Plays an essential role in viral RNA replication by recruiting ACBD3 and PI4KB at the viral replication sites, thereby allowing the formation of the rearranged membranous structures where viral replication takes place. Acts as a primer for viral RNA replication and remains covalently bound to viral genomic RNA. VPg is uridylylated prior to priming replication into VPg-pUpU. The oriI viral genomic sequence may act as a template for this. The VPg-pUpU is then used as primer on the genomic RNA poly(A) by the RNA-dependent RNA polymerase to replicate the viral genome. During genome replication, the VPg-RNA linkage is removed by the host TDP2, thereby accelerating replication. During the late stage of the replication cycle, host TDP2 is excluded from sites of viral RNA synthesis and encapsidation, allowing for the generation of progeny virions. In terms of biological role, involved in the viral replication complex and viral polypeptide maturation. It exhibits protease activity with a specificity and catalytic efficiency that is different from protease 3C. Protein 3CD lacks polymerase activity. Protein 3CD binds to the 5'UTR of the viral genome. Its function is as follows. Replicates the viral genomic RNA on the surface of intracellular membranes. May form linear arrays of subunits that propagate along a strong head-to-tail interaction called interface-I. Covalently attaches UMP to a tyrosine of VPg, which is used to prime RNA synthesis. The positive stranded RNA genome is first replicated at virus induced membranous vesicles, creating a dsRNA genomic replication form. This dsRNA is then used as template to synthesize positive stranded RNA genomes. ss(+)RNA genomes are either translated, replicated or encapsidated. Functionally, major viral protease that mediates proteolytic processing of the polyprotein. Cleaves host EIF5B, contributing to host translation shutoff. Also cleaves host PABPC1, contributing to host translation shutoff. Cleaves host NLRP1, triggers host N-glycine-mediated degradation of the autoinhibitory NLRP1 N-terminal fragment. This chain is Genome polyprotein, found in Coxsackievirus A9 (strain Griggs).